A 573-amino-acid chain; its full sequence is ESX-1 secretion system protein EccA1 (573 aa).

334–341 (GPPGTGKT) contributes to the ATP binding site.

The protein belongs to the CbxX/CfxQ family. As to quaternary structure, part of the ESX-1 / type VII secretion system (T7SS), which is composed of cytosolic and membrane components.

Its subcellular location is the cytoplasm. Functionally, part of the ESX-1 specialized secretion system, which delivers several virulence factors to host cells during infection, including the key virulence factors EsxA (ESAT-6) and EsxB (CFP-10). EccA1 exhibits ATPase activity and may provide energy for the export of ESX-1 substrates. The polypeptide is ESX-1 secretion system protein EccA1 (Mycobacterium tuberculosis (strain CDC 1551 / Oshkosh)).